Here is a 357-residue protein sequence, read N- to C-terminus: Elongation factor Ts (357 aa).

Residues 82-85 (TDFV) are involved in Mg(2+) ion dislocation from EF-Tu.

It belongs to the EF-Ts family.

It is found in the cytoplasm. Functionally, associates with the EF-Tu.GDP complex and induces the exchange of GDP to GTP. It remains bound to the aminoacyl-tRNA.EF-Tu.GTP complex up to the GTP hydrolysis stage on the ribosome. The sequence is that of Elongation factor Ts from Campylobacter jejuni subsp. jejuni serotype O:2 (strain ATCC 700819 / NCTC 11168).